Reading from the N-terminus, the 464-residue chain is Anthocyanidin 3-O-galactosyltransferase 3GT1 (464 aa).

2 residues coordinate an anthocyanidin: Ser-19 and His-21. Catalysis depends on His-21, which acts as the Proton acceptor. Asn-38 carries N-linked (GlcNAc...) asparagine glycosylation. Asp-121 (charge relay) is an active-site residue. His-152 contributes to the an anthocyanidin binding site. UDP-alpha-D-glucose contacts are provided by Ala-342, Gln-344, His-359, Trp-362, Asn-363, Ser-364, and Glu-367. An anthocyanidin is bound at residue Gly-382. Asp-383 is a binding site for UDP-alpha-D-glucose.

This sequence belongs to the UDP-glycosyltransferase family. In terms of assembly, monomer. In terms of tissue distribution, mostly expressed in leaves and flowers and, to a lower extent, in roots. In flowers, mainly observed in petals, toruses and scapes, and at lower levels in pistils and stamens.

The catalysed reaction is cyanidin + UDP-alpha-D-galactose = cyanidin 3-O-beta-D-galactoside + UDP + H(+). It catalyses the reaction cyanidin + UDP-alpha-D-glucose = cyanidin 3-O-beta-D-glucoside + UDP + H(+). It carries out the reaction delphinidin + UDP-alpha-D-glucose = delphinidin 3-O-beta-D-glucoside + UDP. The enzyme catalyses malvidin + UDP-alpha-D-glucose = malvidin 3-O-beta-D-glucoside + UDP. The catalysed reaction is delphinidin + UDP-alpha-D-galactose = delphinidin 3-O-beta-D-galactoside + UDP + H(+). It catalyses the reaction pelargonidin + UDP-alpha-D-galactose = pelargonidin 3-O-beta-D-galactoside betaine + UDP. It carries out the reaction peonidin + UDP-alpha-D-galactose = peonidin 3-O-beta-D-galactoside + UDP. The enzyme catalyses malvidin + UDP-alpha-D-galactose = malvidin 3-O-beta-D-galactoside + UDP + H(+). The catalysed reaction is petunidin + UDP-alpha-D-galactose = petunidin 3-O-beta-D-galactoside + UDP. It catalyses the reaction an anthocyanidin + UDP-alpha-D-glucose + H(+) = an anthocyanidin 3-O-beta-D-glucoside + UDP. It carries out the reaction an anthocyanidin + UDP-alpha-D-galactose = an anthocyanidin 3-O-beta-D-galactoside + UDP. It functions in the pathway pigment biosynthesis; anthocyanin biosynthesis. Flavonoid 3-O-glycosyltransferase involved in the biosynthesis of anthocyanins conferring flower red/pink colors, mainly anthocyanidin 3-O-glycosides. Catalyzes the addition of UDP-sugar to the 3-OH of anthocyanidin, with a preference for UDP-galactose (UDP-Gal) as sugar donor and cyanidin as substrate; able to use delphinidin, pelargonidin, peonidin, malvidin and petunidin as substrates in the presence of UDP-Gal. Can also use UDP-glucose (UDP-Glu) as sugar donor with delphinidin, cyanidin and malvidin as substrates, but not active on pelargonidin, peonidin and petunidin. This Rhododendron delavayi (Rhododendron) protein is Anthocyanidin 3-O-galactosyltransferase 3GT1.